The following is a 517-amino-acid chain: AAA ATPase forming ring-shaped complexes (517 aa).

Positions 25–53 form a coiled coil; sequence ARNAKLVELLQASRTKLEEINGRLEALAE. 233 to 238 is a binding site for ATP; sequence GNGKTL.

It belongs to the AAA ATPase family. In terms of assembly, homohexamer. Assembles into a hexameric ring structure.

The sequence is that of AAA ATPase forming ring-shaped complexes from Corynebacterium jeikeium (strain K411).